The chain runs to 375 residues: Homeobox protein Meis3 (375 aa).

Residues 25-51 (PETVPAVPGPYGPHRPPQPLPPGLDSD) are disordered. The span at 31–46 (VPGPYGPHRPPQPLPP) shows a compositional bias: pro residues. The MEIS N-terminal domain maps to 96 to 179 (GGDVCSSDSF…PIDLVIEDRD (84 aa)). 2 disordered regions span residues 197 to 268 (PDQN…KRGI) and 329 to 348 (NRTG…GGYT). The span at 227–241 (SQSGDNSSDQGDGLD) shows a compositional bias: low complexity. A DNA-binding region (homeobox; TALE-type) is located at residues 262-324 (RNKKRGIFPK…NARRRIVQPM (63 aa)).

The protein belongs to the TALE/MEIS homeobox family.

It localises to the nucleus. Functionally, transcriptional regulator which directly modulates PDPK1 expression, thus promoting survival of pancreatic beta-cells. Also regulates expression of NDFIP1, BNIP3, and CCNG1. This chain is Homeobox protein Meis3 (MEIS3), found in Homo sapiens (Human).